Reading from the N-terminus, the 281-residue chain is Glycerol uptake facilitator protein (281 aa).

The Cytoplasmic segment spans residues 1–5 (MSQTS). The chain crosses the membrane as a helical span at residues 6–34 (TLKGQCIAEFLGTGLLIFFGVGCVAALKV). Residues 35–39 (AGASF) lie on the Periplasmic side of the membrane. A helical membrane pass occupies residues 40–60 (GQWEISVIWGLGVAMAIYLTA). The Cytoplasmic segment spans residues 61 to 63 (GVS). Residues 64-67 (GAHL) lie within the membrane without spanning it. The NPA 1 motif lies at 68 to 70 (NPA). An intramembrane region (helical) is located at residues 68-78 (NPAVTIALWLF). The Cytoplasmic portion of the chain corresponds to 79–84 (ACFDKR). Residues 85–108 (KVIPFIVSQVAGAFCAAALVYGLY) form a helical membrane-spanning segment. The Periplasmic segment spans residues 109–143 (YNLFFDFEQTHHIVRGSVESVDLAGTFSTYPNPHI). Residues 144-169 (NFVQAFAVEMVITAILMGLILALTDD) traverse the membrane as a helical segment. At 170 to 177 (GNGVPRGP) the chain is on the cytoplasmic side. The helical transmembrane segment at 178 to 194 (LAPLLIGLLIAVIGASM) threads the bilayer. The Periplasmic segment spans residues 195–198 (GPLT). Residues 199–202 (GFAM) lie within the membrane without spanning it. The short motif at 203-205 (NPA) is the NPA 2 element. Residues 203 to 216 (NPARDFGPKVFAWL) constitute an intramembrane region (helical). The Periplasmic portion of the chain corresponds to 217-231 (AGWGNVAFTGGRDIP). Residues 232–254 (YFLVPLFGPIVGAIVGAFAYRKL) traverse the membrane as a helical segment. The Cytoplasmic segment spans residues 255 to 281 (IGRHLPCDICVVEEKETTTPSEQKASL).

It belongs to the MIP/aquaporin (TC 1.A.8) family. As to quaternary structure, homotetramer.

The protein resides in the cell inner membrane. It catalyses the reaction glycerol(in) = glycerol(out). Mediates glycerol diffusion across the cytoplasmic membrane via a pore-type mechanism. The sequence is that of Glycerol uptake facilitator protein (glpF) from Escherichia coli O157:H7.